Reading from the N-terminus, the 231-residue chain is 5'-methylthioadenosine/S-adenosylhomocysteine nucleosidase (231 aa).

The active-site Proton acceptor is the glutamate 12. Residues glycine 78, isoleucine 153, and 174-175 each bind substrate; that span reads ME. The active-site Proton donor is aspartate 198.

Belongs to the PNP/UDP phosphorylase family. MtnN subfamily.

It carries out the reaction S-adenosyl-L-homocysteine + H2O = S-(5-deoxy-D-ribos-5-yl)-L-homocysteine + adenine. It catalyses the reaction S-methyl-5'-thioadenosine + H2O = 5-(methylsulfanyl)-D-ribose + adenine. The enzyme catalyses 5'-deoxyadenosine + H2O = 5-deoxy-D-ribose + adenine. The protein operates within amino-acid biosynthesis; L-methionine biosynthesis via salvage pathway; S-methyl-5-thio-alpha-D-ribose 1-phosphate from S-methyl-5'-thioadenosine (hydrolase route): step 1/2. In terms of biological role, catalyzes the irreversible cleavage of the glycosidic bond in both 5'-methylthioadenosine (MTA) and S-adenosylhomocysteine (SAH/AdoHcy) to adenine and the corresponding thioribose, 5'-methylthioribose and S-ribosylhomocysteine, respectively. Also cleaves 5'-deoxyadenosine, a toxic by-product of radical S-adenosylmethionine (SAM) enzymes, into 5-deoxyribose and adenine. The sequence is that of 5'-methylthioadenosine/S-adenosylhomocysteine nucleosidase from Maridesulfovibrio salexigens (strain ATCC 14822 / DSM 2638 / NCIMB 8403 / VKM B-1763) (Desulfovibrio salexigens).